We begin with the raw amino-acid sequence, 272 residues long: Shikimate dehydrogenase (NADP(+)) (272 aa).

Residues 14-16 and Thr-61 contribute to the shikimate site; that span reads SLS. Lys-65 functions as the Proton acceptor in the catalytic mechanism. Residue Asp-102 participates in shikimate binding. NADP(+)-binding positions include 127–131, 151–156, and Leu-215; these read GAGGA and NRTPSK. Tyr-217 is a binding site for shikimate. NADP(+) is bound at residue Gly-239.

This sequence belongs to the shikimate dehydrogenase family. In terms of assembly, homodimer.

It carries out the reaction shikimate + NADP(+) = 3-dehydroshikimate + NADPH + H(+). Its pathway is metabolic intermediate biosynthesis; chorismate biosynthesis; chorismate from D-erythrose 4-phosphate and phosphoenolpyruvate: step 4/7. Its function is as follows. Involved in the biosynthesis of the chorismate, which leads to the biosynthesis of aromatic amino acids. Catalyzes the reversible NADPH linked reduction of 3-dehydroshikimate (DHSA) to yield shikimate (SA). The protein is Shikimate dehydrogenase (NADP(+)) of Coxiella burnetii (strain CbuK_Q154) (Coxiella burnetii (strain Q154)).